Here is a 745-residue protein sequence, read N- to C-terminus: Elongation factor G, mitochondrial (745 aa).

The tr-type G domain maps to 40–317; the sequence is EKIRNIGISA…AVLDYLPNPG (278 aa). GTP is bound by residues 49–56, 116–120, and 170–173; these read AHIDSGKT, DTPGH, and NKLD.

It belongs to the TRAFAC class translation factor GTPase superfamily. Classic translation factor GTPase family. EF-G/EF-2 subfamily.

Its subcellular location is the mitochondrion. It participates in protein biosynthesis; polypeptide chain elongation. In terms of biological role, mitochondrial GTPase that catalyzes the GTP-dependent ribosomal translocation step during translation elongation. During this step, the ribosome changes from the pre-translocational (PRE) to the post-translocational (POST) state as the newly formed A-site-bound peptidyl-tRNA and P-site-bound deacylated tRNA move to the P and E sites, respectively. Catalyzes the coordinated movement of the two tRNA molecules, the mRNA and conformational changes in the ribosome. Essential during development as it acts as a retrograde signal from mitochondria to the nucleus to slow down cell proliferation if mitochondrial energy output is low. The polypeptide is Elongation factor G, mitochondrial (Drosophila willistoni (Fruit fly)).